The chain runs to 498 residues: ATP synthase subunit beta, chloroplastic (498 aa).

172–179 (GGAGVGKT) is an ATP binding site.

This sequence belongs to the ATPase alpha/beta chains family. As to quaternary structure, F-type ATPases have 2 components, CF(1) - the catalytic core - and CF(0) - the membrane proton channel. CF(1) has five subunits: alpha(3), beta(3), gamma(1), delta(1), epsilon(1). CF(0) has four main subunits: a(1), b(1), b'(1) and c(9-12).

It localises to the plastid. Its subcellular location is the chloroplast thylakoid membrane. The enzyme catalyses ATP + H2O + 4 H(+)(in) = ADP + phosphate + 5 H(+)(out). In terms of biological role, produces ATP from ADP in the presence of a proton gradient across the membrane. The catalytic sites are hosted primarily by the beta subunits. The protein is ATP synthase subunit beta, chloroplastic of Phaseolus vulgaris (Kidney bean).